The sequence spans 135 residues: Small ribosomal subunit protein uS9 (135 aa).

Belongs to the universal ribosomal protein uS9 family.

This chain is Small ribosomal subunit protein uS9 (rps9), found in Archaeoglobus fulgidus (strain ATCC 49558 / DSM 4304 / JCM 9628 / NBRC 100126 / VC-16).